Here is a 409-residue protein sequence, read N- to C-terminus: Adenosine deaminase (409 aa).

Residues His-65, His-67, His-207, and Asp-314 each contribute to the Zn(2+) site.

This sequence belongs to the metallo-dependent hydrolases superfamily. Zn(2+) is required as a cofactor.

The enzyme catalyses adenosine + H2O + H(+) = inosine + NH4(+). Functionally, catalyzes the deamination of adenosine into inosine. Is also able to deaminate adenine, but with considerably less efficiency. Is not active toward 6-chloroadenine. The sequence is that of Adenosine deaminase from Helicobacter pylori (strain ATCC 700392 / 26695) (Campylobacter pylori).